Here is a 474-residue protein sequence, read N- to C-terminus: MAAAPIQQNGTHTGVPIDLDPPDSRKRPLEAPPEAGSTKRTNTGEDGQYFLKVLIPSYAAGSIIGKGGQTIVQLQKETGATIKLSKSKDFYPGTTERVCLIQGTIEALNAVHGFIAEKIREMPQNVAKTEPVSILQPQTTVNPDRIKQVKIIVPNSTAGLIIGKGGATVKAIMEQSGAWVQLSQKPDGINLQERVVTVSGEPEQNRKAVELIIQKIQEDPQSGSCLNISYANVTGPVANSNPTGFPYANTAEVLPTAAAAAGLLGHANLAGVAAFPAVLSGFTGNDLVAITSALNTLASYGYNLNTLGLGLSQAAATGALAAAAASANPAAAAANLLATYASEASASGSTAGGTAGTFALGSLAAATAATNGYFGAASPLAASAILGTEKSTDGSKDVVEIAVPENLVGAILGKGGKTLVEYQELTGARIQISKKGEFVPGTRNRKVTITGTPAATQAAQYLITQRITYEQGVR.

Residues 1–12 (MAAAPIQQNGTH) are compositionally biased toward polar residues. The segment at 1–43 (MAAAPIQQNGTHTGVPIDLDPPDSRKRPLEAPPEAGSTKRTNT) is disordered. A Bipartite nuclear localization signal motif is present at residues 26–42 (KRPLEAPPEAGSTKRTN). KH domains follow at residues 48 to 115 (QYFL…HGFI), 146 to 212 (IKQV…VELI), and 396 to 463 (KDVV…QYLI). Residues 394–474 (GSKDVVEIAV…QRITYEQGVR (81 aa)) form a required for RNA binding region.

In terms of assembly, interacts with PTBP2; the interaction is direct.

Its subcellular location is the nucleus. Functions to regulate alternative splicing in neurons by binding pre-mRNA in a sequence-specific manner to activate exon inclusion or exclusion. It binds specifically to the sequences 5'-YCAY-3' and regulates splicing in only a subset of regulated exons. Binding to an exonic 5'-YCAY-3' cluster changes the protein complexes assembled on pre-mRNA, blocking U1 snRNP binding and exon inclusion, whereas binding to an intronic 5'-YCAY-3' cluster enhances spliceosome assembly and exon inclusion. Binding to 5'-YCAY-3' clusters results in a local and asymmetric action to regulate spliceosome assembly and alternative splicing in neurons. Binding to an exonic 5'-YCAY-3' cluster changed the protein complexes assembled on pre-mRNA, blocking U1 snRNP (small nuclear ribonucleoprotein) binding and exon inclusion, whereas binding to an intronic 5'-YCAY-3' cluster enhanced spliceosome assembly and exon inclusion. With NOVA1, they perform unique biological functions in different brain areas and cell types. Autoregulates its own expression by acting as a splicing repressor. Acts to activate the inclusion of exon E3A in the glycine receptor alpha-2 chain and of exon E9 in gamma-aminobutyric-acid receptor gamma-2 subunit via a distal downstream UCAU-rich intronic splicing enhancer. Acts to regulate a novel glycine receptor alpha-2 chain splice variant (alpha-2N) in developing spinal cord. In Rattus norvegicus (Rat), this protein is RNA-binding protein Nova-1.